Consider the following 399-residue polypeptide: Probable aspartate/prephenate aminotransferase (399 aa).

Positions 39, 125, and 175 each coordinate L-aspartate. K239 carries the post-translational modification N6-(pyridoxal phosphate)lysine. Residue R375 participates in L-aspartate binding.

This sequence belongs to the class-I pyridoxal-phosphate-dependent aminotransferase family. As to quaternary structure, homodimer. The cofactor is pyridoxal 5'-phosphate.

It is found in the cytoplasm. It carries out the reaction L-aspartate + 2-oxoglutarate = oxaloacetate + L-glutamate. The enzyme catalyses L-arogenate + 2-oxoglutarate = prephenate + L-glutamate. Functionally, catalyzes the reversible conversion of aspartate and 2-oxoglutarate to glutamate and oxaloacetate. Can also transaminate prephenate in the presence of glutamate. The protein is Probable aspartate/prephenate aminotransferase (aatA) of Rickettsia bellii (strain RML369-C).